The chain runs to 506 residues: Proline--tRNA ligase (506 aa).

This sequence belongs to the class-II aminoacyl-tRNA synthetase family. ProS type 3 subfamily. Homodimer.

The protein resides in the cytoplasm. It carries out the reaction tRNA(Pro) + L-proline + ATP = L-prolyl-tRNA(Pro) + AMP + diphosphate. In terms of biological role, catalyzes the attachment of proline to tRNA(Pro) in a two-step reaction: proline is first activated by ATP to form Pro-AMP and then transferred to the acceptor end of tRNA(Pro). The chain is Proline--tRNA ligase from Rhodopirellula baltica (strain DSM 10527 / NCIMB 13988 / SH1).